Consider the following 340-residue polypeptide: ATP-dependent 6-phosphofructokinase (340 aa).

Glycine 11 contributes to the ATP binding site. ADP is bound at residue 21-25 (RAVVR). Residues 72-73 (RY) and 102-105 (GDGS) each bind ATP. Aspartate 103 contributes to the Mg(2+) binding site. 125–127 (TID) is a binding site for substrate. Aspartate 127 functions as the Proton acceptor in the catalytic mechanism. ADP is bound at residue arginine 154. Residues arginine 162 and 169 to 171 (MGR) each bind substrate. ADP-binding positions include 185-187 (GAD), lysine 211, and 213-215 (KNH). Substrate is bound by residues glutamate 222, arginine 244, and 250–253 (HIQR).

It belongs to the phosphofructokinase type A (PFKA) family. ATP-dependent PFK group I subfamily. Prokaryotic clade 'B1' sub-subfamily. As to quaternary structure, homotetramer. Mg(2+) serves as cofactor.

It is found in the cytoplasm. The enzyme catalyses beta-D-fructose 6-phosphate + ATP = beta-D-fructose 1,6-bisphosphate + ADP + H(+). Its pathway is carbohydrate degradation; glycolysis; D-glyceraldehyde 3-phosphate and glycerone phosphate from D-glucose: step 3/4. Its activity is regulated as follows. Allosterically activated by ADP and other diphosphonucleosides, and allosterically inhibited by phosphoenolpyruvate. In terms of biological role, catalyzes the phosphorylation of D-fructose 6-phosphate to fructose 1,6-bisphosphate by ATP, the first committing step of glycolysis. The protein is ATP-dependent 6-phosphofructokinase of Lactococcus lactis subsp. lactis (Streptococcus lactis).